The chain runs to 552 residues: Dihydroxy-acid dehydratase (552 aa).

Cys-46 lines the [2Fe-2S] cluster pocket. Residue Asp-78 coordinates Mg(2+). A [2Fe-2S] cluster-binding site is contributed by Cys-119. 2 residues coordinate Mg(2+): Asp-120 and Lys-121. Lys-121 carries the post-translational modification N6-carboxylysine. Residue Cys-191 participates in [2Fe-2S] cluster binding. Residue Glu-442 participates in Mg(2+) binding. The active-site Proton acceptor is Ser-468.

It belongs to the IlvD/Edd family. Homodimer. Requires [2Fe-2S] cluster as cofactor. Mg(2+) serves as cofactor.

The enzyme catalyses (2R)-2,3-dihydroxy-3-methylbutanoate = 3-methyl-2-oxobutanoate + H2O. The catalysed reaction is (2R,3R)-2,3-dihydroxy-3-methylpentanoate = (S)-3-methyl-2-oxopentanoate + H2O. It participates in amino-acid biosynthesis; L-isoleucine biosynthesis; L-isoleucine from 2-oxobutanoate: step 3/4. Its pathway is amino-acid biosynthesis; L-valine biosynthesis; L-valine from pyruvate: step 3/4. In terms of biological role, functions in the biosynthesis of branched-chain amino acids. Catalyzes the dehydration of (2R,3R)-2,3-dihydroxy-3-methylpentanoate (2,3-dihydroxy-3-methylvalerate) into 2-oxo-3-methylpentanoate (2-oxo-3-methylvalerate) and of (2R)-2,3-dihydroxy-3-methylbutanoate (2,3-dihydroxyisovalerate) into 2-oxo-3-methylbutanoate (2-oxoisovalerate), the penultimate precursor to L-isoleucine and L-valine, respectively. This chain is Dihydroxy-acid dehydratase, found in Picrophilus torridus (strain ATCC 700027 / DSM 9790 / JCM 10055 / NBRC 100828 / KAW 2/3).